We begin with the raw amino-acid sequence, 202 residues long: 3-isopropylmalate dehydratase small subunit (202 aa).

The protein belongs to the LeuD family. LeuD type 1 subfamily. Heterodimer of LeuC and LeuD.

The catalysed reaction is (2R,3S)-3-isopropylmalate = (2S)-2-isopropylmalate. The protein operates within amino-acid biosynthesis; L-leucine biosynthesis; L-leucine from 3-methyl-2-oxobutanoate: step 2/4. Functionally, catalyzes the isomerization between 2-isopropylmalate and 3-isopropylmalate, via the formation of 2-isopropylmaleate. The polypeptide is 3-isopropylmalate dehydratase small subunit (Caulobacter vibrioides (strain ATCC 19089 / CIP 103742 / CB 15) (Caulobacter crescentus)).